Consider the following 449-residue polypeptide: 23S rRNA (uracil(1939)-C(5))-methyltransferase RlmD (449 aa).

The TRAM domain occupies 1–66 (MGRSRYHNKL…AKFDEAKVVE (66 aa)). 4 residues coordinate [4Fe-4S] cluster: cysteine 79, cysteine 85, cysteine 88, and cysteine 169. The S-adenosyl-L-methionine site is built by glutamine 280, phenylalanine 309, asparagine 314, glutamate 330, asparagine 357, and aspartate 379. Catalysis depends on cysteine 405, which acts as the Nucleophile.

It belongs to the class I-like SAM-binding methyltransferase superfamily. RNA M5U methyltransferase family. RlmD subfamily.

It catalyses the reaction uridine(1939) in 23S rRNA + S-adenosyl-L-methionine = 5-methyluridine(1939) in 23S rRNA + S-adenosyl-L-homocysteine + H(+). Its function is as follows. Catalyzes the formation of 5-methyl-uridine at position 1939 (m5U1939) in 23S rRNA. The polypeptide is 23S rRNA (uracil(1939)-C(5))-methyltransferase RlmD (Francisella tularensis subsp. holarctica (strain LVS)).